The chain runs to 88 residues: uncharacterized protein (88 aa).

This is an uncharacterized protein from Thermoproteus tenax virus 1 (strain KRA1) (TTV1).